Reading from the N-terminus, the 450-residue chain is Chromosomal replication initiator protein DnaA (450 aa).

The tract at residues 1-76 (MNLNDILKEL…KKILKQPVNI (76 aa)) is domain I, interacts with DnaA modulators. The tract at residues 76 to 107 (ISFTYEQEYQKQLEKTESINKDHSDIISKKNK) is domain II. The tract at residues 108–327 (KVNENTFENF…GSVSRLNFWS (220 aa)) is domain III, AAA+ region. The ATP site is built by G151, G153, K154, and T155. The tract at residues 328–450 (QQNPEEKVIT…DILKNKILTK (123 aa)) is domain IV, binds dsDNA.

The protein belongs to the DnaA family. Oligomerizes as a right-handed, spiral filament on DNA at oriC.

It is found in the cytoplasm. It localises to the cell membrane. Plays an essential role in the initiation and regulation of chromosomal replication. ATP-DnaA binds to the origin of replication (oriC) to initiate formation of the DNA replication initiation complex once per cell cycle. Binds the DnaA box (a 9 base pair repeat at the origin) and separates the double-stranded (ds)DNA. Forms a right-handed helical filament on oriC DNA; dsDNA binds to the exterior of the filament while single-stranded (ss)DNA is stabiized in the filament's interior. The ATP-DnaA-oriC complex binds and stabilizes one strand of the AT-rich DNA unwinding element (DUE), permitting loading of DNA polymerase. After initiation quickly degrades to an ADP-DnaA complex that is not apt for DNA replication. Binds acidic phospholipids. This chain is Chromosomal replication initiator protein DnaA, found in Mycoplasma capricolum subsp. capricolum (strain California kid / ATCC 27343 / NCTC 10154).